The following is a 404-amino-acid chain: Serine/threonine transporter SstT (404 aa).

Transmembrane regions (helical) follow at residues 10 to 30 (ILGG…ICLA), 53 to 73 (AIAP…KEVG), 81 to 101 (ILVM…ILSY), 140 to 160 (AITN…GIAL), 177 to 197 (AVSF…FGLV), 215 to 235 (LLAV…PLLV), 287 to 307 (IAIP…ITVL), and 329 to 349 (IVAS…LLLI).

It belongs to the dicarboxylate/amino acid:cation symporter (DAACS) (TC 2.A.23) family.

It localises to the cell inner membrane. It catalyses the reaction L-serine(in) + Na(+)(in) = L-serine(out) + Na(+)(out). The catalysed reaction is L-threonine(in) + Na(+)(in) = L-threonine(out) + Na(+)(out). In terms of biological role, involved in the import of serine and threonine into the cell, with the concomitant import of sodium (symport system). The chain is Serine/threonine transporter SstT from Glaesserella parasuis serovar 5 (strain SH0165) (Haemophilus parasuis).